We begin with the raw amino-acid sequence, 488 residues long: Zinc metalloproteinase-disintegrin VMP-II (488 aa).

The first 20 residues, 1-20 (MIQVLLVTICLAVFPYQGSS), serve as a signal peptide directing secretion. A propeptide spanning residues 21–191 (IILESGNVND…KASQSNIPPE (171 aa)) is cleaved from the precursor. One can recognise a Peptidase M12B domain in the interval 198-396 (RYIELVVVAD…STTRCLHNEP (199 aa)). Positions 201 and 285 each coordinate Ca(2+). An N-linked (GlcNAc...) asparagine glycan is attached at asparagine 296. Intrachain disulfides connect cysteine 309–cysteine 391, cysteine 349–cysteine 373, and cysteine 351–cysteine 356. Histidine 334 is a Zn(2+) binding site. Glutamate 335 is a catalytic residue. Zn(2+)-binding residues include histidine 338 and histidine 344. Residues cysteine 391, asparagine 394, asparagine 409, glutamate 413, glutamate 416, and aspartate 419 each coordinate Ca(2+). One can recognise a Disintegrin domain in the interval 404–488 (PPFCGNYFKE…ADCPRNGLYG (85 aa)). Intrachain disulfides connect cysteine 407–cysteine 426, cysteine 418–cysteine 436, cysteine 420–cysteine 431, cysteine 430–cysteine 453, cysteine 444–cysteine 450, cysteine 449–cysteine 474, and cysteine 462–cysteine 481. The Cell attachment site motif lies at 466 to 468 (RGD).

The protein belongs to the venom metalloproteinase (M12B) family. P-II subfamily. P-IIb sub-subfamily. In terms of assembly, homodimer; disulfide-linked (disintegrin). Requires Zn(2+) as cofactor. Expressed by the venom gland.

Its subcellular location is the secreted. In terms of biological role, zinc metalloproteinase-disintegrin VMP-II: inhibits ADP-induced platelet aggregation (probably by binding integrin alpha-IIb/beta-3 (ITGA2B/ITGB3)) and degrades fibrinogen. Recombinant disintegrin r-Cam-dis (413-488): this recombinant protein inhibits platelet adhesion to fibrinogen (IC(50) is 1 nM), inhibits collagen- (IC(50) is 18 nM) and ADP-induced (IC(50) is 6 nM) platelet aggregation, and also inhibits platelet function on clot retraction. May act by binding integrin alpha-IIb/beta-3 (ITGA2B/ITGB3). The polypeptide is Zinc metalloproteinase-disintegrin VMP-II (Crotalus adamanteus (Eastern diamondback rattlesnake)).